A 115-amino-acid polypeptide reads, in one-letter code: Secreted RxLR effector protein 2 (115 aa).

Residues 1-22 form the signal peptide; sequence MICRSPLIVVMLFVIAAHTVLA. The short motif at 57-82 is the RxLR-dEER element; it reads RFLRQETTFEKKLGVNDVHAVHAEER.

The protein belongs to the RxLR effector family.

It is found in the secreted. The protein resides in the host cytoplasm. It localises to the host nucleus. Effector that acts as a broad suppressor of cell death to interrupt plant immunity. Inhibits cell death induced by cell death-inducing proteins, including the PAMP elicitor INF1 from P.infestans. The protein is Secreted RxLR effector protein 2 of Plasmopara viticola (Downy mildew of grapevine).